The chain runs to 125 residues: Holo-[acyl-carrier-protein] synthase (125 aa).

Positions 8 and 57 each coordinate Mg(2+).

Belongs to the P-Pant transferase superfamily. AcpS family. Mg(2+) serves as cofactor.

It is found in the cytoplasm. It catalyses the reaction apo-[ACP] + CoA = holo-[ACP] + adenosine 3',5'-bisphosphate + H(+). Functionally, transfers the 4'-phosphopantetheine moiety from coenzyme A to a Ser of acyl-carrier-protein. The polypeptide is Holo-[acyl-carrier-protein] synthase (Azoarcus sp. (strain BH72)).